The chain runs to 255 residues: NAD kinase (255 aa).

The active-site Proton acceptor is the aspartate 44. Residues 44–45, histidine 49, 114–115, aspartate 144, alanine 152, 155–160, and glutamine 216 each bind NAD(+); these read DG, NE, and SAYNLS.

Belongs to the NAD kinase family. Requires a divalent metal cation as cofactor.

The protein resides in the cytoplasm. The enzyme catalyses NAD(+) + ATP = ADP + NADP(+) + H(+). Involved in the regulation of the intracellular balance of NAD and NADP, and is a key enzyme in the biosynthesis of NADP. Catalyzes specifically the phosphorylation on 2'-hydroxyl of the adenosine moiety of NAD to yield NADP. This chain is NAD kinase, found in Rickettsia typhi (strain ATCC VR-144 / Wilmington).